The sequence spans 208 residues: Large ribosomal subunit protein uL3 (208 aa).

The interval 130–168 (GGSKTHGQSDRLRAPGSVGGSSFPSRTFKGQRMAGRKGS) is disordered.

The protein belongs to the universal ribosomal protein uL3 family. Part of the 50S ribosomal subunit. Forms a cluster with proteins L14 and L19.

Its function is as follows. One of the primary rRNA binding proteins, it binds directly near the 3'-end of the 23S rRNA, where it nucleates assembly of the 50S subunit. In Chloroherpeton thalassium (strain ATCC 35110 / GB-78), this protein is Large ribosomal subunit protein uL3.